A 72-amino-acid polypeptide reads, in one-letter code: Long neurotoxin OH-5 (72 aa).

Intrachain disulfides connect Cys-3–Cys-22, Cys-15–Cys-43, Cys-28–Cys-32, Cys-47–Cys-58, and Cys-59–Cys-64.

Belongs to the three-finger toxin family. Long-chain subfamily. Type II alpha-neurotoxin sub-subfamily. In terms of tissue distribution, expressed by the venom gland.

Its subcellular location is the secreted. Binds with high affinity to muscular (alpha-1/CHRNA1) and neuronal (alpha-7/CHRNA7) nicotinic acetylcholine receptor (nAChR) and inhibits acetylcholine from binding to the receptor, thereby impairing neuromuscular and neuronal transmission. In Ophiophagus hannah (King cobra), this protein is Long neurotoxin OH-5.